We begin with the raw amino-acid sequence, 670 residues long: Solute carrier organic anion transporter family member 1A5 (670 aa).

Residues 1-20 (MGETEKRVATHEVRCFSKIK) are Cytoplasmic-facing. Residues 21–40 (MFLLALTWAYVSKSLSGIYM) form a helical membrane-spanning segment. The Extracellular portion of the chain corresponds to 41-59 (NTMLTQIERQFDIPTSIVG). The chain crosses the membrane as a helical span at residues 60–80 (FINGSFEIGNLLLIIFVSYFG). The Cytoplasmic portion of the chain corresponds to 81–86 (TKLHRP). The helical transmembrane segment at 87-111 (IMIGVGCVIMGLGCFLMSLPHFLMG) threads the bilayer. The Extracellular portion of the chain corresponds to 112-155 (RYEYETTISPTSNLSSNSFLCMENRSQTLKPTQDPAECIKEMKS). N124 and N135 each carry an N-linked (GlcNAc...) asparagine glycan. Residues 156–184 (LMWIYVLVGNIIRGIGETPIMPLGISYIE) traverse the membrane as a helical segment. Residues 185-203 (DFAKSENSPLYIGILETGK) are Cytoplasmic-facing. The chain crosses the membrane as a helical span at residues 204 to 224 (VFGPIVGLLLGSFCASIYVDT). Over 225–242 (GSVNTDDLTITPTDTRWV) the chain is Extracellular. Residues 243-267 (GAWWIGFLICAGVNILSSIPFFFFP) form a helical membrane-spanning segment. Residues 268–311 (KTLPKEGLQDDVDGTNNDKEEKHREKAKEENRGITKDFLPFMKS) are Cytoplasmic-facing. Residues 312–333 (LSCNPIYMLLILTSVLQINAFI) form a helical membrane-spanning segment. The Extracellular segment spans residues 334–353 (NMFTFLPKYLEQQYGKSTAE). Residues 354 to 377 (VVLLIGVYNLPPICIGYLLIGFIM) form a helical membrane-spanning segment. Topologically, residues 378–381 (KKFK) are cytoplasmic. A helical membrane pass occupies residues 382 to 405 (ITVKKAAYMAFCLSLFEYLLYFLH). At 406 to 513 (FMITCDNFPV…PECANKLQYF (108 aa)) the chain is on the extracellular side. A Kazal-like domain is found at 433–488 (NKVLADCNRGCSCSTNSWDPVCGDNGLAYMSACLAGCKKSVGTGTNMVFQNCSCIR). Disulfide bonds link C439/C469, C445/C465, and C454/C486. 2 N-linked (GlcNAc...) asparagine glycosylation sites follow: N483 and N492. The chain crosses the membrane as a helical span at residues 514–536 (LIMSVIGSFIYSITAIPGYMVLL). Topologically, residues 537-545 (RCIKPEEKS) are cytoplasmic. The chain crosses the membrane as a helical span at residues 546-571 (LGIGLHAFCTRVFAGIPAPIYFGALI). The Extracellular portion of the chain corresponds to 572–605 (DRTCLHWGTLKCGEPGACRMYNINNFRRIYLVLP). A helical transmembrane segment spans residues 606-623 (AALRGSSYLPALFILILM). Topologically, residues 624 to 670 (RKFQFPGEIDSSETELAEMKITVKKSECTDVHGSPQVENDGELKTRL) are cytoplasmic.

This sequence belongs to the organo anion transporter (TC 2.A.60) family. Highly expressed in the kidney, moderately abundant in the retina, and even lower in the liver. Expressed (at protein level) in the small intestine. Expressed at lower levels in brain,lung, and retina.

Its subcellular location is the cell membrane. The protein resides in the basal cell membrane. The catalysed reaction is taurocholate(out) = taurocholate(in). It catalyses the reaction glycocholate(out) = glycocholate(in). It carries out the reaction taurochenodeoxycholate(out) = taurochenodeoxycholate(in). The enzyme catalyses tauroursodeoxycholate(out) = tauroursodeoxycholate(in). The catalysed reaction is 3,3',5'-triiodo-L-thyronine(out) = 3,3',5'-triiodo-L-thyronine(in). It catalyses the reaction L-thyroxine(out) = L-thyroxine(in). It carries out the reaction taurodeoxycholate(out) = taurodeoxycholate(in). The enzyme catalyses glycodeoxycholate(out) = glycodeoxycholate(in). The catalysed reaction is glycochenodeoxycholate(out) = glycochenodeoxycholate(in). It catalyses the reaction glycoursodeoxycholate(out) = glycoursodeoxycholate(in). It carries out the reaction estrone 3-sulfate(out) = estrone 3-sulfate(in). The enzyme catalyses prostaglandin E2(out) = prostaglandin E2(in). The catalysed reaction is substance P(out) = substance P(in). In terms of biological role, na(+)-independent transporter that mediates the cellular uptake of a broad range of organic anions such as the endogenous bile salts cholate and deoxycholate, either in their unconjugated or conjugated forms (taurocholate and glycocholate), estrone 3-sulfate and prostaglandin E2, at the plasma membrane. Responsible for intestinal absorption of bile acids. Capable of thyroid hormone transport (both T3 or 3,3',5'-triiodo-L-thyronine, and T4 or L-tyroxine). Plays roles in blood-brain and -cerebrospinal fluid barrier transport of organic anions and signal mediators, and in hormone uptake by neural cells. May also play a role in the reuptake of neuropeptides such as substance P/TAC1 and vasoactive intestinal peptide/VIP released from retinal neurons. Shows a pH-sensitive substrate specificity which may be ascribed to the protonation state of the binding site and leads to a stimulation of substrate transport in an acidic microenvironment. Hydrogencarbonate/HCO3(-) acts as the probable counteranion that exchanges for organic anions. May contribute to regulate the transport of organic compounds in testis across the blood-testis-barrier. The sequence is that of Solute carrier organic anion transporter family member 1A5 (Slco1a5) from Rattus norvegicus (Rat).